We begin with the raw amino-acid sequence, 62 residues long: Venom protein 51.1 (62 aa).

Residues 1-25 (MKFFGILLIVTMVVLVMIATTYVES) form the signal peptide. Disulfide bonds link Cys-32–Cys-53, Cys-39–Cys-58, and Cys-43–Cys-60.

In terms of tissue distribution, expressed by the venom gland.

Its subcellular location is the secreted. In terms of biological role, neurotoxin. Decreases the action potential of myelinated nerves in mice and frogs. The sequence is that of Venom protein 51.1 from Lychas mucronatus (Chinese swimming scorpion).